The sequence spans 158 residues: UPF0102 protein GbCGDNIH1_0975 (158 aa).

This sequence belongs to the UPF0102 family.

The sequence is that of UPF0102 protein GbCGDNIH1_0975 from Granulibacter bethesdensis (strain ATCC BAA-1260 / CGDNIH1).